We begin with the raw amino-acid sequence, 374 residues long: MSTLRIALVAGEASGDILGAGLMRALKVQHPAVEFIGVGGPLMEAEGLVSYFPMERLAVMGLVEVLGRLRELLARRKKLIQTLIAEKPDVFIGIDAPDFTLNIELKLRQARIKTVHYVSPSVWAWRQKRVLKIREGCDLMLTLFPFEARFYEEKGVPVKFVGHSLADAIPLEADRAAARAELGLPEGPLVALMPGSRGGEVGRLGALFLDAAQRLRAMRPGVRFIMPCASPERRVQLEQLLANRDLPLTLLDGQSHKALAACDAVLIASGTATLEALLYKRPMVVAYRLAPLTFWILKRMVKSPYISLPNLLAQRLLVPELLQDDATADALAQTLSPLIEGGEEQTRGFDEIHRTLRRDASNQAAQAVLGLIGK.

The protein belongs to the LpxB family.

It catalyses the reaction a lipid X + a UDP-2-N,3-O-bis[(3R)-3-hydroxyacyl]-alpha-D-glucosamine = a lipid A disaccharide + UDP + H(+). The protein operates within bacterial outer membrane biogenesis; LPS lipid A biosynthesis. In terms of biological role, condensation of UDP-2,3-diacylglucosamine and 2,3-diacylglucosamine-1-phosphate to form lipid A disaccharide, a precursor of lipid A, a phosphorylated glycolipid that anchors the lipopolysaccharide to the outer membrane of the cell. The sequence is that of Lipid-A-disaccharide synthase from Pseudomonas fluorescens (strain ATCC BAA-477 / NRRL B-23932 / Pf-5).